A 916-amino-acid polypeptide reads, in one-letter code: MMEDEYQLEYFKSEGLTRNICSSCGKAFWTRNPDRMVCGDAPCEPYQFIGNPIFRAKTVDEMREAYLSFFEKQGHTRIDRYPVAARWRDDIYLTIASIADFQPFVTSGVVPPPANPLTISQPCIRLNDLDSVGRSGRHLTCFEMMAHHAFNSDEKEIYWKDRTVELCDQLLTSLGANKEMVTYKEHPWIGGGNAGPSVEVLIGGLEVATLVFMSLGKQKTEKPPIELEGTPYYPMTLRIVDTGYGLERFVWASQGSPTIYDAVFPEMVSHVMQEAGFGHRLHDSDFIHILGENAKFAGLMDISGQRIFELRQKVAEKIGIPTDKLEKMIAPVESVYAIVDHTRCLSYMLGDCIVPSNAKDGYLARLVLRRTLRMMRELDLPDEKLGDLIERQMKIIGLSKFEQDPDVVMEIVDREVDKYRTTMERGARTVERLAQTYKKKCEKIPLDEIITLYDSHGIPPDMVKDLATSQGAVVDLPDDFYSRIANMHSESEQIQEKNPLFDYLDRLAHLPETRKLFYERPGSMEFEAKVLEIFDGQYVVLDQTLFYPEGGGQPGDTGLFLTPDGLTVRVCDTIKLGESILHRIDGGNVRKGDMIRGILDEDRRLSLMRHHTATHILLHAAKEVLGAHIHQAGAQKGEYSSRIDIRHYKHITPEELKKIEVVANRLVMANSSTSIAWEDRTDAEQKYGFCLYQGGVPPGSRIRVVKVAGDIEACAGTHCAHTGDIGTISIIRVEHVQDGVERLEFAAGIAAIQHKHHQEDLLNRSAEAFSVQVEALPATSKRFFDEWKEQRKEIEKLSSRISELESKNLETVDYNGISVLVKRLDLPNPELVKVATGISDKGGIAILVAGGETARVVVSSGQKGVKAGDVISTVCAVLGGKGGGKPTLAQGGGPDVSKIDDALAAGESFIKSALHV.

Zn(2+)-binding residues include H611, H615, C714, and H718.

The protein belongs to the class-II aminoacyl-tRNA synthetase family. The cofactor is Zn(2+).

The protein localises to the cytoplasm. The enzyme catalyses tRNA(Ala) + L-alanine + ATP = L-alanyl-tRNA(Ala) + AMP + diphosphate. Functionally, catalyzes the attachment of alanine to tRNA(Ala) in a two-step reaction: alanine is first activated by ATP to form Ala-AMP and then transferred to the acceptor end of tRNA(Ala). Also edits incorrectly charged Ser-tRNA(Ala) and Gly-tRNA(Ala) via its editing domain. In Methanospirillum hungatei JF-1 (strain ATCC 27890 / DSM 864 / NBRC 100397 / JF-1), this protein is Alanine--tRNA ligase.